Here is a 104-residue protein sequence, read N- to C-terminus: L-rhamnose mutarotase (104 aa).

Residue Tyr18 coordinates substrate. The active-site Proton donor is the His22. Substrate is bound by residues Tyr41 and 76–77 (WW).

This sequence belongs to the rhamnose mutarotase family. As to quaternary structure, homodimer.

Its subcellular location is the cytoplasm. The enzyme catalyses alpha-L-rhamnose = beta-L-rhamnose. It participates in carbohydrate metabolism; L-rhamnose metabolism. Its function is as follows. Involved in the anomeric conversion of L-rhamnose. This is L-rhamnose mutarotase from Shigella flexneri serotype 5b (strain 8401).